The primary structure comprises 141 residues: Ly6/PLAUR domain-containing protein 1 (141 aa).

The N-terminal stretch at 1–20 (MWVLGIAATFCGLFLLPGFA) is a signal peptide. 6 disulfides stabilise this stretch: C25-C54, C28-C37, C46-C71, C77-C100, C88-C97, and C101-C106. Residues 25–107 (CYQCEEFQLN…ISCCNTPLCN (83 aa)) form the UPAR/Ly6 domain. An N-linked (GlcNAc...) asparagine glycan is attached at N45. The GPI-anchor amidated serine moiety is linked to residue S117. Residues 118 to 141 (ASALRPGLRTTILFLKLALFSAHC) constitute a propeptide, removed in mature form.

As to quaternary structure, interacts with CHRNA4 and nAChRs containing alpha-4:beta-2 (CHRNA4:CHRNB2) and alpha-7 (CHRNA7) subunits.

The protein resides in the cell membrane. Its function is as follows. Believed to act as a modulator of nicotinic acetylcholine receptors (nAChRs) activity. In vitro increases receptor desensitization and decreases affinity for ACh of alpha-4:beta-2-containing nAChRs. May play a role in the intracellular trafficking of alpha-4:beta-2 and alpha-7-containing nAChRs and may inhibit their expression at the cell surface. May be involved in the control of anxiety. This chain is Ly6/PLAUR domain-containing protein 1 (LYPD1), found in Homo sapiens (Human).